A 449-amino-acid chain; its full sequence is UMP-CMP kinase 2, mitochondrial (449 aa).

Residues 1–98 (MAFARRLLRG…VRAARLHQRL (98 aa)) constitute a mitochondrion transit peptide. 259 to 266 (GLDATGKT) lines the ATP pocket. Residues 380–412 (EERLQRLQGRGMEKTREEAELEANSVFRQKVEM) are a coiled coil.

It belongs to the thymidylate kinase family. In terms of tissue distribution, high levels are observed in myeloid, lymphoid and mesenchymal tissues.

It is found in the mitochondrion. It catalyses the reaction CMP + ATP = CDP + ADP. The catalysed reaction is dCMP + ATP = dCDP + ADP. It carries out the reaction a 2'-deoxyribonucleoside 5'-diphosphate + ATP = a 2'-deoxyribonucleoside 5'-triphosphate + ADP. The enzyme catalyses a ribonucleoside 5'-diphosphate + ATP = a ribonucleoside 5'-triphosphate + ADP. Its function is as follows. Mitochondrial nucleotide monophosphate kinase needed for salvage dNTP synthesis that mediates immunomodulatory and antiviral activities through IFN-dependent and IFN-independent pathways. Restricts the replication of multiple viruses including flaviviruses or coronaviruses. Together with viperin/RSAD2 and ddhCTP, suppresses the replication of several coronaviruses through inhibition of the viral RNA-dependent RNA polymerase activities. Concerning flaviviruses, restricts RNA translation when localized to the mitochondria independently of its kinase activity. Is able to phosphorylate dUMP, dCMP, CMP, UMP and monophosphates of the pyrimidine nucleoside analogs ddC, dFdC, araC, BVDU and FdUrd with ATP as phosphate donor. Efficacy is highest for dUMP followed by dCMP while CMP and UMP are poor substrates. Controls therefore mitochondrial DNA synthesis by supplying required deoxyribonucleotides. CMPK2-dependent mitochondrial DNA synthesis is necessary for the production of oxidized mitochondrial DNA fragments after exposure to NLRP3 activators. In turn, cytosolic oxidized mtDNA associates with the NLRP3 inflammasome complex and is required for its activation. The sequence is that of UMP-CMP kinase 2, mitochondrial (CMPK2) from Homo sapiens (Human).